Consider the following 156-residue polypeptide: Snaclec A3 (156 aa).

Positions 1 to 23 (MGRSISVSFGLLVVFLSLSGTGA) are cleaved as a signal peptide. 3 disulfides stabilise this stretch: cysteine 27/cysteine 38, cysteine 55/cysteine 154, and cysteine 129/cysteine 146. The 122-residue stretch at 34 to 155 (HEGHCYKVFN…CGQPYRFTCE (122 aa)) folds into the C-type lectin domain.

The protein belongs to the snaclec family. In terms of assembly, heterodimer; disulfide-linked. Expressed by the venom gland.

Its subcellular location is the secreted. Its function is as follows. Interferes with one step of hemostasis (modulation of platelet aggregation, or coagulation cascade, for example). This is Snaclec A3 from Macrovipera lebetinus (Levantine viper).